A 154-amino-acid chain; its full sequence is Large ribosomal subunit protein uL16 (154 aa).

This sequence belongs to the universal ribosomal protein uL16 family. Part of the 50S ribosomal subunit.

Its function is as follows. Binds 23S rRNA and is also seen to make contacts with the A and possibly P site tRNAs. The protein is Large ribosomal subunit protein uL16 of Synechococcus sp. (strain RCC307).